Here is an 834-residue protein sequence, read N- to C-terminus: ATP-dependent 6-phosphofructokinase (834 aa).

Residues 1–426 (MTTTSKIIND…FYEIFIACSN (426 aa)) form an N-terminal catalytic PFK domain 1 region. ATP-binding positions include Gly62, 123–124 (RS), and 153–156 (GDGS). Asp154 is a Mg(2+) binding site. Substrate-binding positions include 199 to 201 (SID), Arg236, 243 to 245 (MGR), Glu299, Arg326, and 332 to 335 (HVQR). Residue Asp201 is the Proton acceptor of the active site. The interval 427-437 (LHRRKVESKGM) is interdomain linker. Residues 438–834 (GVLILHSGGP…DPNVNPQFTL (397 aa)) form a C-terminal regulatory PFK domain 2 region. Beta-D-fructose 2,6-bisphosphate contacts are provided by residues Arg507, 566-570 (TIANN), Arg603, 610-612 (MGA), Glu666, Arg692, 698-701 (HLQQ), and Arg764. The interval 799-834 (SNLSEQDRPIKKSDISSPTSYSQKTFDPNVNPQFTL) is disordered. Basic and acidic residues predominate over residues 803 to 812 (EQDRPIKKSD). Positions 813 to 834 (ISSPTSYSQKTFDPNVNPQFTL) are enriched in polar residues.

The protein belongs to the phosphofructokinase type A (PFKA) family. ATP-dependent PFK group I subfamily. Eukaryotic two domain clade 'E' sub-subfamily. Homotetramer. Mg(2+) serves as cofactor. The N-terminus is blocked.

It localises to the cytoplasm. It catalyses the reaction beta-D-fructose 6-phosphate + ATP = beta-D-fructose 1,6-bisphosphate + ADP + H(+). Its pathway is carbohydrate degradation; glycolysis; D-glyceraldehyde 3-phosphate and glycerone phosphate from D-glucose: step 3/4. Allosterically activated by ADP, AMP, or fructose 2,6-bisphosphate, and allosterically inhibited by ATP or citrate. Functionally, catalyzes the phosphorylation of D-fructose 6-phosphate to fructose 1,6-bisphosphate by ATP, the first committing step of glycolysis. The sequence is that of ATP-dependent 6-phosphofructokinase (pfkA) from Dictyostelium discoideum (Social amoeba).